A 325-amino-acid chain; its full sequence is Leucine carboxyl methyltransferase 1 (325 aa).

Residues Arg-79, Gly-104, Asp-127, 174-175 (DL), and Glu-200 each bind S-adenosyl-L-methionine.

It belongs to the methyltransferase superfamily. LCMT family.

It carries out the reaction [phosphatase 2A protein]-C-terminal L-leucine + S-adenosyl-L-methionine = [phosphatase 2A protein]-C-terminal L-leucine methyl ester + S-adenosyl-L-homocysteine. Its function is as follows. Methylates the carboxyl group of the C-terminal leucine residue of protein phosphatase 2A catalytic subunits to form alpha-leucine ester residues. The protein is Leucine carboxyl methyltransferase 1 (PPM1) of Eremothecium gossypii (strain ATCC 10895 / CBS 109.51 / FGSC 9923 / NRRL Y-1056) (Yeast).